Here is a 691-residue protein sequence, read N- to C-terminus: Ubiquitin-like domain-containing protein CIP73 (691 aa).

The 76-residue stretch at 22–97 folds into the Ubiquitin-like domain; it reads IEIKIKMLDS…LHLVARHPDL (76 aa). 7 disordered regions span residues 92 to 118, 176 to 203, 264 to 283, 432 to 473, 499 to 554, 590 to 624, and 645 to 691; these read ARHP…TGHG, TGLG…ISSD, RNEE…EGLS, ASTT…ASIA, SVNT…SSRV, EIHV…EPNV, and HIGR…QKME. Polar residues-rich tracts occupy residues 104-118, 178-189, 273-283, 446-465, and 499-523; these read PNHS…TGHG, LGRTSDFTGNPS, SRLSSTPEGLS, TQSA…QTTS, and SVNT…STAE. Residues 525-535 are compositionally biased toward basic and acidic residues; the sequence is TLHRQSMEDSA. The segment covering 536–554 has biased composition (polar residues); the sequence is RNGTLPTPNTQQEPSSSRV. Residues 597–617 show a composition bias toward low complexity; sequence SSQGTTAGVTSAATSSGAAQA.

In terms of assembly, interacts with CCAMK. Post-translationally, phosphorylated at the N-terminus by CCAMK. As to expression, highly epressed in roots. Expressed at very low levels in leaves and stems.

The protein resides in the nucleus. Its function is as follows. Involved in root nodulation. Required for root nodule organogenesis after infection by symbiotic rhizobia. Probably not involved in arbuscular mycorrhizal (AM) symbiosis. Acts downstream of CCAMK. The protein is Ubiquitin-like domain-containing protein CIP73 of Lotus japonicus (Lotus corniculatus var. japonicus).